A 493-amino-acid chain; its full sequence is Alpha-amylase-related protein (493 aa).

Positions 1–19 are cleaved as a signal peptide; that stretch reads MFKFALTLTLCLAGSLSLA. Gln-20 carries the pyrrolidone carboxylic acid modification. Cysteines 47 and 103 form a disulfide. Ca(2+) is bound by residues Asn-117, Gln-168, and Asp-177. A disulfide bridge links Cys-156 with Cys-170. A chloride-binding site is contributed by Arg-205. Asp-207 acts as the Nucleophile in catalysis. Residue His-211 coordinates Ca(2+). The Proton donor role is filled by Glu-244. Residues Asn-307 and Arg-342 each coordinate chloride. Cystine bridges form between Cys-375–Cys-381, Cys-417–Cys-440, and Cys-447–Cys-459.

Belongs to the glycosyl hydrolase 13 family. As to quaternary structure, monomer. It depends on Ca(2+) as a cofactor. The cofactor is chloride. In terms of tissue distribution, midgut and fat body.

Its subcellular location is the secreted. The catalysed reaction is Endohydrolysis of (1-&gt;4)-alpha-D-glucosidic linkages in polysaccharides containing three or more (1-&gt;4)-alpha-linked D-glucose units.. The chain is Alpha-amylase-related protein (Amyrel) from Drosophila melanogaster (Fruit fly).